The primary structure comprises 143 residues: Deoxyuridine 5'-triphosphate nucleotidohydrolase (143 aa).

It belongs to the dUTPase family. The cofactor is Mg(2+).

The enzyme catalyses dUTP + H2O = dUMP + diphosphate + H(+). Its function is as follows. This enzyme is involved in nucleotide metabolism: it produces dUMP, the immediate precursor of thymidine nucleotides and it decreases the intracellular concentration of dUTP so that uracil cannot be incorporated into DNA. In Yaba monkey tumor virus (strain VR587) (YMTV), this protein is Deoxyuridine 5'-triphosphate nucleotidohydrolase (DUT).